Consider the following 384-residue polypeptide: Dual-specificity RNA methyltransferase RlmN (384 aa).

The active-site Proton acceptor is the E105. The Radical SAM core domain occupies 111 to 350 (EDDRATLCVS…TIVRKTRGDD (240 aa)). A disulfide bridge connects residues C118 and C355. [4Fe-4S] cluster-binding residues include C125, C129, and C132. Residues 179 to 180 (GE), S211, 233 to 235 (SLH), and N312 contribute to the S-adenosyl-L-methionine site. C355 (S-methylcysteine intermediate) is an active-site residue.

This sequence belongs to the radical SAM superfamily. RlmN family. The cofactor is [4Fe-4S] cluster.

It is found in the cytoplasm. The catalysed reaction is adenosine(2503) in 23S rRNA + 2 reduced [2Fe-2S]-[ferredoxin] + 2 S-adenosyl-L-methionine = 2-methyladenosine(2503) in 23S rRNA + 5'-deoxyadenosine + L-methionine + 2 oxidized [2Fe-2S]-[ferredoxin] + S-adenosyl-L-homocysteine. It carries out the reaction adenosine(37) in tRNA + 2 reduced [2Fe-2S]-[ferredoxin] + 2 S-adenosyl-L-methionine = 2-methyladenosine(37) in tRNA + 5'-deoxyadenosine + L-methionine + 2 oxidized [2Fe-2S]-[ferredoxin] + S-adenosyl-L-homocysteine. Specifically methylates position 2 of adenine 2503 in 23S rRNA and position 2 of adenine 37 in tRNAs. m2A2503 modification seems to play a crucial role in the proofreading step occurring at the peptidyl transferase center and thus would serve to optimize ribosomal fidelity. This chain is Dual-specificity RNA methyltransferase RlmN, found in Escherichia coli O6:H1 (strain CFT073 / ATCC 700928 / UPEC).